The sequence spans 482 residues: Probable 2-carboxy-D-arabinitol-1-phosphatase (482 aa).

A chloroplast-targeting transit peptide spans Met1 to Ser34. Catalysis depends on His55, which acts as the Tele-phosphohistidine intermediate. Glu129 acts as the Proton donor/acceptor in catalysis.

The protein belongs to the phosphoglycerate mutase family.

It is found in the plastid. It localises to the chloroplast stroma. The enzyme catalyses 2-carboxy-D-arabinitol 1-phosphate + H2O = 2-carboxy-D-arabinitol + phosphate. Functionally, phosphoglycerate mutase-like protein lacking PGM activity, but having 2-carboxy-D-arabinitol 1-phosphate (CA1P) phosphatase activity. Prevents the accumulation of D-glycero-2,3-pentodiulose-1,5-bisphosphate (PDBP) a potent inhibitor of ribulose-1,5-bisphosphate carboxylase (RuBisCO). PDBP is produced during the oxidation of ribulose-1,5-bisphosphate, the substrate of RuBisCO. This chain is Probable 2-carboxy-D-arabinitol-1-phosphatase, found in Arabidopsis thaliana (Mouse-ear cress).